The following is a 285-amino-acid chain: Polyamine aminopropyltransferase (285 aa).

One can recognise a PABS domain in the interval 5 to 241 (DNWYIEHFQP…GWWSVTMASK (237 aa)). Residue Gln35 coordinates S-methyl-5'-thioadenosine. The spermidine site is built by His66 and Asp90. S-methyl-5'-thioadenosine is bound by residues Asp110 and 141-142 (DG). Asp160 (proton acceptor) is an active-site residue. Spermidine is bound at residue 160-163 (DSTD). S-methyl-5'-thioadenosine is bound at residue Pro167.

The protein belongs to the spermidine/spermine synthase family. Homodimer or homotetramer.

Its subcellular location is the cytoplasm. It catalyses the reaction S-adenosyl 3-(methylsulfanyl)propylamine + putrescine = S-methyl-5'-thioadenosine + spermidine + H(+). The protein operates within amine and polyamine biosynthesis; spermidine biosynthesis; spermidine from putrescine: step 1/1. In terms of biological role, catalyzes the irreversible transfer of a propylamine group from the amino donor S-adenosylmethioninamine (decarboxy-AdoMet) to putrescine (1,4-diaminobutane) to yield spermidine. This is Polyamine aminopropyltransferase from Xanthomonas oryzae pv. oryzae (strain MAFF 311018).